A 346-amino-acid chain; its full sequence is Coproporphyrin III ferrochelatase (346 aa).

2 residues coordinate Fe-coproporphyrin III: serine 52 and tyrosine 121. Fe(2+) is bound by residues histidine 181 and glutamate 264.

This sequence belongs to the ferrochelatase family.

The protein resides in the cytoplasm. It catalyses the reaction Fe-coproporphyrin III + 2 H(+) = coproporphyrin III + Fe(2+). It functions in the pathway porphyrin-containing compound metabolism; protoheme biosynthesis. In terms of biological role, involved in coproporphyrin-dependent heme b biosynthesis. Catalyzes the insertion of ferrous iron into coproporphyrin III to form Fe-coproporphyrin III. The chain is Coproporphyrin III ferrochelatase from Mycobacterium sp. (strain JLS).